A 267-amino-acid polypeptide reads, in one-letter code: Kafirin PSKR2 (267 aa).

Residues 1 to 21 (MATKIFVLLALLALSVSTTTA) form the signal peptide.

It belongs to the zein family.

In terms of biological role, major seed storage prolamin. The protein is Kafirin PSKR2 of Sorghum bicolor (Sorghum).